Reading from the N-terminus, the 444-residue chain is Cop9 signalosome complex subunit 11 (444 aa).

In terms of domain architecture, PCI spans Phe195–Gln367. Positions Ser419–Gly439 are disordered.

As to quaternary structure, component of a COP9 signalosome-like (CSN) complex, composed of RRI1/CSN5, CSN9, RRI2/CSN10, PCI8/CSN11, CSN12 and CSI1. Interacts with PRT1 and RPG1, 2 subunits of the core complex of translation initiation factor 3 (eIF3).

It is found in the cytoplasm. The protein resides in the nucleus. Functionally, component of the COP9 signalosome (CSN) complex that acts as an regulator of the ubiquitin (Ubl) conjugation pathway by mediating the deneddylation of the cullin subunit of SCF-type E3 ubiquitin-protein ligase complexes The CSN complex is involved in the regulation of the mating pheromone response. PCI8 may also be involved in transcriptional and translational control. This chain is Cop9 signalosome complex subunit 11 (PCI8), found in Saccharomyces cerevisiae (strain ATCC 204508 / S288c) (Baker's yeast).